Consider the following 814-residue polypeptide: MKRFINSTVTFSVTVTIAVIIFFLLSPVTSLGSGSTYAVVYGSDTVCALISGQPTQRILCYDTRLNINVTLNPGVSFSSIAAGDNFLCGIRSGGYSLLCWDNIGSYSPNRKRIYQNDNVLLETLSVGDKQICATVNGTNSLKCWRGSVSDQSKPPNERFRSISSGVGFSCGVSIRNNRILCWGTDPVKSNQIQTGFGNTPMVTISAGKSHACGLNTTGNLICIGNNDSGQLNVIAPDQPNLYSSSLSLGSNFTCAMRISNNSVVCWGGGAERFNNVTDSISFESISSGPGLICGLISSNLSIMCWNPTNFSRIFLPFPEVLPGPCVESSSSSLCSCGVYPQSDKLCSGTGSICKSCPIQFPASPPSQFPLPPPPPPPPPSPSTSSPPSKALTRGLLAFAIVGSVGAFAGICSVVYCLWTGVCLGKKKVHNSVQPTITRGGSNSRSNSSNSRSLSIRRQGSRMLSMRRQRSGTSSMKHADKAEEFSFSELASATGNFSLENKIGSGSFGVVYRGKLNDGREVAIKRGEVNAKMKKFQEKETAFDSEIAFLSRLHHKHLVRLVGYCEEREEKLLVYDYMKNGALYDHLHDKNNVEKHSSLINSWKMRIKIALDAARGIEYLHNYAVPPIIHRDIKSSNILLDSNWVARVSDFGLSLMGPVLGKDHNPYQRPTKAAGTVGYIDPEYYSLNVLTDKSDVYGLGVVLLELLTGKRAIFRNNGDVEEEEGCVPVHLVDYSVPAITADELSTILDPRVGSPELGEGDAVELVAYTAMHCVNAEGRNRPTMTDIVGNLERALDLCGDSHGSISSGICSIVSD.

A signal peptide spans 1–30 (MKRFINSTVTFSVTVTIAVIIFFLLSPVTS). Residues Asn-6, Asn-68, Asn-136, Asn-215, Asn-226, Asn-251, Asn-260, Asn-275, Asn-299, and Asn-309 are each glycosylated (N-linked (GlcNAc...) asparagine). Topologically, residues 31–393 (LGSGSTYAVV…SSPPSKALTR (363 aa)) are extracellular. Pro residues predominate over residues 366–381 (SQFPLPPPPPPPPPSP). Residues 366 to 388 (SQFPLPPPPPPPPPSPSTSSPPS) are disordered. Residues 394–414 (GLLAFAIVGSVGAFAGICSVV) form a helical membrane-spanning segment. The Cytoplasmic segment spans residues 415 to 814 (YCLWTGVCLG…SSGICSIVSD (400 aa)). Positions 433-478 (QPTITRGGSNSRSNSSNSRSLSIRRQGSRMLSMRRQRSGTSSMKHA) are disordered. The segment covering 441 to 457 (SNSRSNSSNSRSLSIRR) has biased composition (low complexity). The region spanning 496–794 (FSLENKIGSG…DIVGNLERAL (299 aa)) is the Protein kinase domain. Residues 502–510 (IGSGSFGVV) and Lys-524 each bind ATP. Asp-631 (proton acceptor) is an active-site residue.

This sequence belongs to the protein kinase superfamily. Ser/Thr protein kinase family. Homodimer. In terms of tissue distribution, expressed in roots, leaves, shoot apical meristems (SAM), and floral buds.

The protein resides in the membrane. It catalyses the reaction L-seryl-[protein] + ATP = O-phospho-L-seryl-[protein] + ADP + H(+). It carries out the reaction L-threonyl-[protein] + ATP = O-phospho-L-threonyl-[protein] + ADP + H(+). In terms of biological role, serine/threonine-protein kinase. In Arabidopsis thaliana (Mouse-ear cress), this protein is Putative serine/threonine-protein kinase-like protein CCR3 (CCR3).